Here is a 344-residue protein sequence, read N- to C-terminus: Methionine import ATP-binding protein MetN (344 aa).

Residues 2–241 enclose the ABC transporter domain; that stretch reads IEINRVNKIF…PKTALAQEFI (240 aa). 38–45 is a binding site for ATP; the sequence is GSSGAGKS.

This sequence belongs to the ABC transporter superfamily. Methionine importer (TC 3.A.1.24) family. In terms of assembly, the complex is composed of two ATP-binding proteins (MetN), two transmembrane proteins (MetI) and a solute-binding protein (MetQ).

Its subcellular location is the cell inner membrane. The enzyme catalyses L-methionine(out) + ATP + H2O = L-methionine(in) + ADP + phosphate + H(+). It carries out the reaction D-methionine(out) + ATP + H2O = D-methionine(in) + ADP + phosphate + H(+). Part of the ABC transporter complex MetNIQ involved in methionine import. Responsible for energy coupling to the transport system. In Aliivibrio fischeri (strain ATCC 700601 / ES114) (Vibrio fischeri), this protein is Methionine import ATP-binding protein MetN.